The sequence spans 134 residues: UPF0715 membrane protein YoaG (134 aa).

A run of 4 helical transmembrane segments spans residues 9–29 (LMTL…YSFV), 35–55 (IIAL…YGLF), 72–92 (VMYL…FFVI), and 106–126 (FYYM…SLIL).

Belongs to the UPF0715 family.

The protein resides in the cell membrane. The sequence is that of UPF0715 membrane protein YoaG (yoaG) from Bacillus subtilis (strain 168).